The sequence spans 287 residues: MKNVLSIQSHVIYGHAGNSAAVFPMQRLGVNVWPLNTVQLSNHMQYGHWAGSAIDAAKMEQLVDGIAAIGALKRCDAVLSGFLGSPAQARAAVEIVRTVKATNPNAWYFCDPAMGQTGGIRPEPGVEEFIVAELPELADGMAPNHGELQKLAGQRIETVAEAVEACRSIIRRGPRLILVKHLHDRNSPADRFNMLVVTETEAWIGQRPLYAFPRHPVGVGDLTSAIFVARRLRGDSVRAAFEHTLAAVHAVVKATYDARRYELELVAAQDEIAQPSEWFGAWVTGAD.

Substrate contacts are provided by residues serine 9 and 44–45 (MQ). Residues aspartate 111, alanine 142, glutamate 147, and lysine 180 each coordinate ATP. Aspartate 221 lines the substrate pocket.

This sequence belongs to the pyridoxine kinase family. PdxY subfamily. As to quaternary structure, homodimer. The cofactor is Mg(2+).

The enzyme catalyses pyridoxal + ATP = pyridoxal 5'-phosphate + ADP + H(+). It functions in the pathway cofactor metabolism; pyridoxal 5'-phosphate salvage; pyridoxal 5'-phosphate from pyridoxal: step 1/1. Pyridoxal kinase involved in the salvage pathway of pyridoxal 5'-phosphate (PLP). Catalyzes the phosphorylation of pyridoxal to PLP. The protein is Pyridoxal kinase PdxY of Burkholderia thailandensis (strain ATCC 700388 / DSM 13276 / CCUG 48851 / CIP 106301 / E264).